The primary structure comprises 233 residues: Purine nucleoside phosphorylase DeoD-type (233 aa).

His-4 provides a ligand contact to a purine D-ribonucleoside. Residues Gly-20, Arg-24, Arg-43, and 87–90 (RIGT) each bind phosphate. A purine D-ribonucleoside is bound by residues 179–181 (EME) and 203–204 (SD). Asp-204 serves as the catalytic Proton donor.

This sequence belongs to the PNP/UDP phosphorylase family. In terms of assembly, homohexamer; trimer of homodimers.

It catalyses the reaction a purine D-ribonucleoside + phosphate = a purine nucleobase + alpha-D-ribose 1-phosphate. It carries out the reaction a purine 2'-deoxy-D-ribonucleoside + phosphate = a purine nucleobase + 2-deoxy-alpha-D-ribose 1-phosphate. Functionally, catalyzes the reversible phosphorolytic breakdown of the N-glycosidic bond in the beta-(deoxy)ribonucleoside molecules, with the formation of the corresponding free purine bases and pentose-1-phosphate. The polypeptide is Purine nucleoside phosphorylase DeoD-type (Helicobacter acinonychis (strain Sheeba)).